Consider the following 261-residue polypeptide: Small ribosomal subunit protein uS2 (261 aa).

The residue at position 2 (Ser-2) is an N-acetylserine. Residues 212–261 are disordered; sequence QNAAEEAKAEETEEAPAAEAETEWTGETDDVDWADSGATPAAEDAAASNW. Positions 222–244 are enriched in acidic residues; sequence ETEEAPAAEAETEWTGETDDVDW.

The protein belongs to the universal ribosomal protein uS2 family. As to quaternary structure, component of the small ribosomal subunit. Mature ribosomes consist of a small (40S) and a large (60S) subunit. The 40S subunit contains about 33 different proteins and 1 molecule of RNA (18S). The 60S subunit contains about 49 different proteins and 3 molecules of RNA (25S, 5.8S and 5S). Interacts with RPS21.

The protein resides in the cytoplasm. Required for the assembly and/or stability of the 40S ribosomal subunit. Required for the processing of the 20S rRNA-precursor to mature 18S rRNA in a late step of the maturation of 40S ribosomal subunits. The polypeptide is Small ribosomal subunit protein uS2 (Candida tropicalis (Yeast)).